Reading from the N-terminus, the 611-residue chain is Solute carrier family 23 member 3 (611 aa).

The Cytoplasmic segment spans residues 1–52; the sequence is MSRSPLHPIPLLSEGYQDTPAPLPPLLPPLQNPSSRSWASRVFGPSTWGLSC. The chain crosses the membrane as a helical span at residues 53-73; the sequence is LLALQHFLVLASLLWASHLLL. Residues 74–88 lie on the Extracellular side of the membrane; that stretch reads LHGLPPGGLSYPPAQ. A helical membrane pass occupies residues 89–109; the sequence is LLASSFFSCGLSTVLQTWMGS. Over 110–168 the chain is Cytoplasmic; the sequence is RLPLIQAPSLEFLIPALVLTNQKLPLTTKTPGNASLSLPLCSLTRSCHGLELWNTSLRE. The chain crosses the membrane as a helical span at residues 169–189; the sequence is VSGAVVVSGLLQGTIGLLGVP. Over 190 to 191 the chain is Extracellular; sequence GR. The chain crosses the membrane as a helical span at residues 192-212; it reads VFPYCGPLVLAPSLVVAGLSA. Over 213–215 the chain is Cytoplasmic; it reads HKE. Residues 216–236 traverse the membrane as a helical segment; the sequence is VAQFCSAHWGLALLLILLMVV. Over 237-269 the chain is Extracellular; it reads CSQHLGSCQIPLCSWRPSSTSTHICIPVFRLLS. The chain crosses the membrane as a helical span at residues 270-290; sequence VLAPVACVWFISAFVGTSVIP. Topologically, residues 291–319 are cytoplasmic; it reads LQLSEPSDAPWFWLPHPGEWEWPLLTPRA. A helical transmembrane segment spans residues 320–340; that stretch reads LAAGISMALAASTSSLGCYAL. Topologically, residues 341-358 are extracellular; it reads CGQLLRLSPPPPHACSRG. Residues 359-379 traverse the membrane as a helical segment; it reads LSLEGLGSVLAGLLGSPLGTA. Residues 380 to 397 lie on the Cytoplasmic side of the membrane; it reads SSFPNVGTVSLFQTGSRR. The helical transmembrane segment at 398–417 threads the bilayer; it reads VAHLVGLFCMGLGLSPRLAQ. Topologically, residues 418–426 are extracellular; it reads LFTSIPLPV. A helical transmembrane segment spans residues 427–449; sequence LGGVLGVTQAVVLSAGFSSFHLA. The Cytoplasmic segment spans residues 450-455; sequence DIDSGR. A helical transmembrane segment spans residues 456-475; it reads NVFIVGFSIFMALLLPRWLR. Residues 476 to 489 lie on the Extracellular side of the membrane; it reads EAPVLLNTGWSPLD. A helical membrane pass occupies residues 490 to 510; it reads MFLRSLLAEPIFLAGLLGFLL. Over 511–611 the chain is Cytoplasmic; the sequence is ENTISGTRAE…TASREGVRSQ (101 aa). The segment at 574-611 is disordered; it reads PEDSGDEGGSSKTGERADLLPNSGESYSTASREGVRSQ. Residues 596-605 are compositionally biased toward polar residues; that stretch reads SGESYSTASR.

This sequence belongs to the nucleobase:cation symporter-2 (NCS2) (TC 2.A.40) family.

It localises to the membrane. Its subcellular location is the cytoplasm. The catalysed reaction is hypoxanthine(out) + Na(+)(out) = hypoxanthine(in) + Na(+)(in). Functionally, acts as a sodium-dependent hypoxanthine transporter. May show xanthine-hypoxanthine exchange activity. This chain is Solute carrier family 23 member 3 (Slc23a3), found in Mus musculus (Mouse).